A 341-amino-acid polypeptide reads, in one-letter code: L-threonine 3-dehydrogenase (341 aa).

Cys38 lines the Zn(2+) pocket. Active-site charge relay system residues include Thr40 and His43. The Zn(2+) site is built by His63, Glu64, Cys93, Cys96, Cys99, and Cys107. Residues Ile175, Asp195, Arg200, 262-264 (LGI), and 286-287 (IY) contribute to the NAD(+) site.

This sequence belongs to the zinc-containing alcohol dehydrogenase family. As to quaternary structure, homotetramer. The cofactor is Zn(2+).

The protein localises to the cytoplasm. It catalyses the reaction L-threonine + NAD(+) = (2S)-2-amino-3-oxobutanoate + NADH + H(+). The protein operates within amino-acid degradation; L-threonine degradation via oxydo-reductase pathway; glycine from L-threonine: step 1/2. Catalyzes the NAD(+)-dependent oxidation of L-threonine to 2-amino-3-ketobutyrate. The sequence is that of L-threonine 3-dehydrogenase from Escherichia coli O17:K52:H18 (strain UMN026 / ExPEC).